A 231-amino-acid chain; its full sequence is Biosynthetic peptidoglycan transglycosylase (231 aa).

Residues 7-27 (LLFWLILVPILLVLLMQLYFF) form a helical membrane-spanning segment.

Belongs to the glycosyltransferase 51 family.

Its subcellular location is the cell inner membrane. It carries out the reaction [GlcNAc-(1-&gt;4)-Mur2Ac(oyl-L-Ala-gamma-D-Glu-L-Lys-D-Ala-D-Ala)](n)-di-trans,octa-cis-undecaprenyl diphosphate + beta-D-GlcNAc-(1-&gt;4)-Mur2Ac(oyl-L-Ala-gamma-D-Glu-L-Lys-D-Ala-D-Ala)-di-trans,octa-cis-undecaprenyl diphosphate = [GlcNAc-(1-&gt;4)-Mur2Ac(oyl-L-Ala-gamma-D-Glu-L-Lys-D-Ala-D-Ala)](n+1)-di-trans,octa-cis-undecaprenyl diphosphate + di-trans,octa-cis-undecaprenyl diphosphate + H(+). It participates in cell wall biogenesis; peptidoglycan biosynthesis. Peptidoglycan polymerase that catalyzes glycan chain elongation from lipid-linked precursors. The sequence is that of Biosynthetic peptidoglycan transglycosylase from Herminiimonas arsenicoxydans.